A 122-amino-acid polypeptide reads, in one-letter code: Urease subunit beta (122 aa).

Belongs to the urease beta subunit family. Heterotrimer of UreA (gamma), UreB (beta) and UreC (alpha) subunits. Three heterotrimers associate to form the active enzyme.

It is found in the cytoplasm. The enzyme catalyses urea + 2 H2O + H(+) = hydrogencarbonate + 2 NH4(+). It participates in nitrogen metabolism; urea degradation; CO(2) and NH(3) from urea (urease route): step 1/1. In Flavobacterium johnsoniae (strain ATCC 17061 / DSM 2064 / JCM 8514 / BCRC 14874 / CCUG 350202 / NBRC 14942 / NCIMB 11054 / UW101) (Cytophaga johnsonae), this protein is Urease subunit beta.